Here is a 43-residue protein sequence, read N- to C-terminus: Protein PsbN (43 aa).

The helical transmembrane segment at 7–27 (VAIFISGLLVSFTGYALYTAF) threads the bilayer.

The protein belongs to the PsbN family.

The protein resides in the plastid. It localises to the chloroplast thylakoid membrane. In terms of biological role, may play a role in photosystem I and II biogenesis. The chain is Protein PsbN from Sagittaria latifolia (Broadleaf arrowhead).